The primary structure comprises 396 residues: Tryptophan synthase beta chain (396 aa).

At Lys86 the chain carries N6-(pyridoxal phosphate)lysine.

It belongs to the TrpB family. In terms of assembly, tetramer of two alpha and two beta chains. It depends on pyridoxal 5'-phosphate as a cofactor.

The enzyme catalyses (1S,2R)-1-C-(indol-3-yl)glycerol 3-phosphate + L-serine = D-glyceraldehyde 3-phosphate + L-tryptophan + H2O. Its pathway is amino-acid biosynthesis; L-tryptophan biosynthesis; L-tryptophan from chorismate: step 5/5. Functionally, the beta subunit is responsible for the synthesis of L-tryptophan from indole and L-serine. The protein is Tryptophan synthase beta chain of Francisella philomiragia subsp. philomiragia (strain ATCC 25017 / CCUG 19701 / FSC 153 / O#319-036).